Consider the following 209-residue polypeptide: RNA chaperone ProQ (209 aa).

Positions 101-155 (LAESKAKVQARRKEQAQKAREEGKAKAKPAANKKPQQPRRTNKPKVQKPTKPVET) are disordered. The segment covering 111-125 (RRKEQAQKAREEGKA) has biased composition (basic and acidic residues). The segment covering 136–148 (QQPRRTNKPKVQK) has biased composition (basic residues).

This sequence belongs to the ProQ family.

It is found in the cytoplasm. Functionally, RNA chaperone with significant RNA binding, RNA strand exchange and RNA duplexing activities. In Vibrio parahaemolyticus serotype O3:K6 (strain RIMD 2210633), this protein is RNA chaperone ProQ.